The primary structure comprises 152 residues: Phosphoribosyl-AMP cyclohydrolase (152 aa).

D92 is a Mg(2+) binding site. Residue C93 participates in Zn(2+) binding. Residues D94 and D96 each coordinate Mg(2+). C111 and C118 together coordinate Zn(2+).

This sequence belongs to the PRA-CH family. Homodimer. The cofactor is Mg(2+). Zn(2+) serves as cofactor.

The protein resides in the cytoplasm. It carries out the reaction 1-(5-phospho-beta-D-ribosyl)-5'-AMP + H2O = 1-(5-phospho-beta-D-ribosyl)-5-[(5-phospho-beta-D-ribosylamino)methylideneamino]imidazole-4-carboxamide. It participates in amino-acid biosynthesis; L-histidine biosynthesis; L-histidine from 5-phospho-alpha-D-ribose 1-diphosphate: step 3/9. Its function is as follows. Catalyzes the hydrolysis of the adenine ring of phosphoribosyl-AMP. The chain is Phosphoribosyl-AMP cyclohydrolase from Sinorhizobium fredii (strain NBRC 101917 / NGR234).